The chain runs to 115 residues: Ribonuclease P protein component (115 aa).

Belongs to the RnpA family. In terms of assembly, consists of a catalytic RNA component (M1 or rnpB) and a protein subunit.

It catalyses the reaction Endonucleolytic cleavage of RNA, removing 5'-extranucleotides from tRNA precursor.. Functionally, RNaseP catalyzes the removal of the 5'-leader sequence from pre-tRNA to produce the mature 5'-terminus. It can also cleave other RNA substrates such as 4.5S RNA. The protein component plays an auxiliary but essential role in vivo by binding to the 5'-leader sequence and broadening the substrate specificity of the ribozyme. In Bacillus cereus (strain ATCC 10987 / NRS 248), this protein is Ribonuclease P protein component.